The sequence spans 120 residues: Large ribosomal subunit protein bL21 (120 aa).

It belongs to the bacterial ribosomal protein bL21 family. As to quaternary structure, part of the 50S ribosomal subunit. Contacts protein L20.

Functionally, this protein binds to 23S rRNA in the presence of protein L20. The sequence is that of Large ribosomal subunit protein bL21 from Rhizorhabdus wittichii (strain DSM 6014 / CCUG 31198 / JCM 15750 / NBRC 105917 / EY 4224 / RW1) (Sphingomonas wittichii).